Consider the following 112-residue polypeptide: cAMP-regulated phosphoprotein 19 (112 aa).

The segment covering 1-11 (MSAESPEPASA) has biased composition (low complexity). The disordered stretch occupies residues 1–49 (MSAESPEPASAEEQKEMEDKVLSPEKAEEAKLKARYPHLGQKPGGSDFL). A compositionally biased stretch (basic and acidic residues) spans 12-32 (EEQKEMEDKVLSPEKAEEAKL). Phosphoserine; by GWL occurs at positions 62 and 104. The tract at residues 72–112 (MKNKQLPTAAPDKTEVTGDHIPTPQDLPQRKPSLVASKLAG) is disordered. S104 carries the post-translational modification Phosphoserine; by PKA.

The protein belongs to the endosulfine family. In terms of assembly, interacts (when phosphorylated at Ser-62) with PPP2R2D. Phosphorylation at Ser-62 by MASTL/GWL during mitosis is essential for interaction with PPP2R2D (PR55-delta) and subsequent inactivation of PP2A.

Its subcellular location is the cytoplasm. Its function is as follows. Protein phosphatase inhibitor that specifically inhibits protein phosphatase 2A (PP2A) during mitosis. Inhibition of PP2A is enhanced when ARPP19 is phosphorylated. When phosphorylated at Ser-62 during mitosis, specifically interacts with PPP2R2D (PR55-delta) and inhibits its activity, leading to inactivation of PP2A, an essential condition to keep cyclin-B1-CDK1 activity high during M phase. The polypeptide is cAMP-regulated phosphoprotein 19 (ARPP19) (Taeniopygia guttata (Zebra finch)).